A 766-amino-acid chain; its full sequence is Dipeptidyl peptidase 4 (766 aa).

Residues 1 to 6 are Cytoplasmic-facing; sequence MKTPWK. The helical; Signal-anchor for type II membrane protein transmembrane segment at 7-28 threads the bilayer; sequence VLLGLLGAAALVTIITVPVVLL. Topologically, residues 29-766 are extracellular; that stretch reads NKGTDDATAD…HFIKQCFSLP (738 aa). N-linked (GlcNAc...) asparagine glycosylation is found at Asn-85, Asn-92, Asn-150, Asn-219, Asn-229, Asn-281, and Asn-321. 4 disulfide bridges follow: Cys-328–Cys-339, Cys-385–Cys-394, Cys-444–Cys-447, and Cys-454–Cys-472. The N-linked (GlcNAc...) asparagine glycan is linked to Asn-520. Ser-630 acts as the Charge relay system in catalysis. A disulfide bond links Cys-649 and Cys-762. Asn-685 is a glycosylation site (N-linked (GlcNAc...) asparagine). Active-site charge relay system residues include Asp-708 and His-740.

This sequence belongs to the peptidase S9B family. DPPIV subfamily. In terms of assembly, monomer. Homodimer. Heterodimer with Seprase (FAP). Requires homodimerization for optimal dipeptidyl peptidase activity and T-cell costimulation. Found in a membrane raft complex, at least composed of BCL10, CARD11, DPP4 and IKBKB. Associates with collagen. Interacts with PTPRC; the interaction is enhanced in an interleukin-12-dependent manner in activated lymphocytes. Interacts (via extracellular domain) with ADA; does not inhibit its dipeptidyl peptidase activity. Interacts with CAV1 (via the N-terminus); the interaction is direct. Interacts (via cytoplasmic tail) with CARD11 (via PDZ domain); its homodimerization is necessary for interaction with CARD11. Interacts with IGF2R; the interaction is direct. Interacts with GPC3. Interacts with human coronavirus-EMC spike protein and acts as a receptor for this virus. (Microbial infection) Interacts with MERS coronavirus/MERS-CoV spike protein. Post-translationally, the soluble form (Dipeptidyl peptidase 4 soluble form also named SDPP) derives from the membrane form (Dipeptidyl peptidase 4 membrane form also named MDPP) by proteolytic processing. N- and O-Glycosylated. In terms of processing, phosphorylated. Mannose 6-phosphate residues in the carbohydrate moiety are necessary for interaction with IGF2R in activated T-cells. Mannose 6-phosphorylation is induced during T-cell activation. Expressed specifically in lymphatic vessels but not in blood vessels in the skin, small intestine, esophagus, ovary, breast and prostate glands. Not detected in lymphatic vessels in the lung, kidney, uterus, liver and stomach (at protein level). Expressed in the poorly differentiated crypt cells of the small intestine as well as in the mature villous cells. Expressed at very low levels in the colon.

The protein localises to the secreted. It is found in the cell membrane. It localises to the apical cell membrane. Its subcellular location is the cell projection. The protein resides in the invadopodium membrane. The protein localises to the lamellipodium membrane. It is found in the cell junction. It localises to the membrane raft. It catalyses the reaction Release of an N-terminal dipeptide, Xaa-Yaa-|-Zaa-, from a polypeptide, preferentially when Yaa is Pro, provided Zaa is neither Pro nor hydroxyproline.. Its activity is regulated as follows. Inhibited by GPC3 and diprotin A. In terms of biological role, cell surface glycoprotein receptor involved in the costimulatory signal essential for T-cell receptor (TCR)-mediated T-cell activation. Acts as a positive regulator of T-cell coactivation, by binding at least ADA, CAV1, IGF2R, and PTPRC. Its binding to CAV1 and CARD11 induces T-cell proliferation and NF-kappa-B activation in a T-cell receptor/CD3-dependent manner. Its interaction with ADA also regulates lymphocyte-epithelial cell adhesion. In association with FAP is involved in the pericellular proteolysis of the extracellular matrix (ECM), the migration and invasion of endothelial cells into the ECM. May be involved in the promotion of lymphatic endothelial cells adhesion, migration and tube formation. When overexpressed, enhanced cell proliferation, a process inhibited by GPC3. Also acts as a serine exopeptidase with a dipeptidyl peptidase activity that regulates various physiological processes by cleaving peptides in the circulation, including many chemokines, mitogenic growth factors, neuropeptides and peptide hormones such as brain natriuretic peptide 32. Removes N-terminal dipeptides sequentially from polypeptides having unsubstituted N-termini provided that the penultimate residue is proline. (Microbial infection) Acts as a receptor for human coronavirus MERS-CoV-2. This Homo sapiens (Human) protein is Dipeptidyl peptidase 4.